Reading from the N-terminus, the 291-residue chain is Exosome complex component RRP42 (291 aa).

An N-acetylalanine modification is found at A2. K116 bears the N6-acetyllysine mark. S177 is modified (phosphoserine).

This sequence belongs to the RNase PH family. In terms of assembly, component of the RNA exosome core complex (Exo-9), composed of EXOSC1, EXOSC2, EXOSC3, EXOSC4, EXOSC5, EXOSC6, EXOSC7, EXOSC8 and EXOSC9; within the complex interacts with EXOSC2 and EXOSC4. The catalytically inactive RNA exosome core complex (Exo-9) associates with the catalytic subunit EXOSC10/RRP6. Exo-9 may associate with DIS3 to form the nucleolar exosome complex, or DIS3L to form the cytoplasmic exosome complex. Exo-9 is formed by a hexameric base ring consisting of the heterodimers EXOSC4-EXOSC9, EXOSC5-EXOSC8 and EXOSC6-EXOSC7, and a cap ring consisting of EXOSC1, EXOSC2 and EXOSC3. The RNA exosome complex associates with cofactors C1D/RRP47, MPHOSPH6/MPP6 and MTREX/MTR4. Interacts with ZC3HAV1. Interacts with DIS3; the interaction is direct.

It localises to the nucleus. The protein resides in the nucleolus. The protein localises to the cytoplasm. In terms of biological role, non-catalytic component of the RNA exosome complex which has 3'-&gt;5' exoribonuclease activity and participates in a multitude of cellular RNA processing and degradation events. In the nucleus, the RNA exosome complex is involved in proper maturation of stable RNA species such as rRNA, snRNA and snoRNA, in the elimination of RNA processing by-products and non-coding 'pervasive' transcripts, such as antisense RNA species and promoter-upstream transcripts (PROMPTs), and of mRNAs with processing defects, thereby limiting or excluding their export to the cytoplasm. The RNA exosome may be involved in Ig class switch recombination (CSR) and/or Ig variable region somatic hypermutation (SHM) by targeting AICDA deamination activity to transcribed dsDNA substrates. In the cytoplasm, the RNA exosome complex is involved in general mRNA turnover and specifically degrades inherently unstable mRNAs containing AU-rich elements (AREs) within their 3' untranslated regions, and in RNA surveillance pathways, preventing translation of aberrant mRNAs. It seems to be involved in degradation of histone mRNA. The catalytic inactive RNA exosome core complex of 9 subunits (Exo-9) is proposed to play a pivotal role in the binding and presentation of RNA for ribonucleolysis, and to serve as a scaffold for the association with catalytic subunits and accessory proteins or complexes. The polypeptide is Exosome complex component RRP42 (EXOSC7) (Homo sapiens (Human)).